The following is a 530-amino-acid chain: Membrane protein insertase YidC (530 aa).

Transmembrane regions (helical) follow at residues 5-25, 348-368, 418-438, and 492-512; these read VVIA…MFPP, YGLA…PLTH, LPML…MFSI, and PVVF…YWLI.

It belongs to the OXA1/ALB3/YidC family. Type 1 subfamily. As to quaternary structure, interacts with the Sec translocase complex via SecD. Specifically interacts with transmembrane segments of nascent integral membrane proteins during membrane integration.

It localises to the cell inner membrane. Required for the insertion and/or proper folding and/or complex formation of integral membrane proteins into the membrane. Involved in integration of membrane proteins that insert both dependently and independently of the Sec translocase complex, as well as at least some lipoproteins. Aids folding of multispanning membrane proteins. In Geotalea daltonii (strain DSM 22248 / JCM 15807 / FRC-32) (Geobacter daltonii), this protein is Membrane protein insertase YidC.